Here is a 284-residue protein sequence, read N- to C-terminus: MFIISGRTMLKKAQQEGYAVPAFNIHNLETLQVVVETAAELRSPLIVAGTPGTFSYAGVGNIVAIAAELAKSWNHPLAVHLDHHEKLADIKMKVAAGVRSVMIDGSHFPFADNIALVKSVVDYCHRYDVSVEAELGRLGGQEDDLIVDGKDALYTHPEQAREFVEKTGIDSLAIAIGTAHGLYTAEPKLDFERLTEIRQRVDVPLVLHGASGLPTRDITRAISLGICKVNVATELKIAFSGALKNYLTQHAEASDPRHYMIPAKAAMKEVVRKVIADCGCEGKL.

Aspartate 82 acts as the Proton donor in catalysis. Residues histidine 83 and histidine 180 each contribute to the Zn(2+) site. Glycine 181 is a dihydroxyacetone phosphate binding site. Histidine 208 contacts Zn(2+). Dihydroxyacetone phosphate contacts are provided by residues 209 to 211 and 230 to 233; these read GAS and NVAT.

Belongs to the class II fructose-bisphosphate aldolase family. TagBP aldolase GatY subfamily. As to quaternary structure, forms a complex with GatZ. It depends on Zn(2+) as a cofactor.

It carries out the reaction D-tagatofuranose 1,6-bisphosphate = D-glyceraldehyde 3-phosphate + dihydroxyacetone phosphate. It participates in carbohydrate metabolism; D-tagatose 6-phosphate degradation; D-glyceraldehyde 3-phosphate and glycerone phosphate from D-tagatose 6-phosphate: step 2/2. Catalytic subunit of the tagatose-1,6-bisphosphate aldolase GatYZ, which catalyzes the reversible aldol condensation of dihydroxyacetone phosphate (DHAP or glycerone-phosphate) with glyceraldehyde 3-phosphate (G3P) to produce tagatose 1,6-bisphosphate (TBP). Requires GatZ subunit for full activity and stability. Is involved in the catabolism of galactitol. In Salmonella enteritidis PT4 (strain P125109), this protein is D-tagatose-1,6-bisphosphate aldolase subunit GatY.